We begin with the raw amino-acid sequence, 113 residues long: Large ribosomal subunit protein bL19 (113 aa).

This sequence belongs to the bacterial ribosomal protein bL19 family.

Functionally, this protein is located at the 30S-50S ribosomal subunit interface and may play a role in the structure and function of the aminoacyl-tRNA binding site. In Mycobacterium bovis (strain ATCC BAA-935 / AF2122/97), this protein is Large ribosomal subunit protein bL19 (rplS).